The primary structure comprises 587 residues: Phosphomethylpyrimidine synthase (587 aa).

Substrate-binding positions include asparagine 218, methionine 247, tyrosine 276, histidine 312, serine 332 to glycine 334, aspartate 373 to arginine 376, and glutamate 412. Histidine 416 is a Zn(2+) binding site. Tyrosine 439 is a binding site for substrate. Residue histidine 480 participates in Zn(2+) binding. Residues cysteine 560, cysteine 563, and cysteine 568 each contribute to the [4Fe-4S] cluster site.

It belongs to the ThiC family. Requires [4Fe-4S] cluster as cofactor.

It carries out the reaction 5-amino-1-(5-phospho-beta-D-ribosyl)imidazole + S-adenosyl-L-methionine = 4-amino-2-methyl-5-(phosphooxymethyl)pyrimidine + CO + 5'-deoxyadenosine + formate + L-methionine + 3 H(+). Its pathway is cofactor biosynthesis; thiamine diphosphate biosynthesis. Catalyzes the synthesis of the hydroxymethylpyrimidine phosphate (HMP-P) moiety of thiamine from aminoimidazole ribotide (AIR) in a radical S-adenosyl-L-methionine (SAM)-dependent reaction. The polypeptide is Phosphomethylpyrimidine synthase (Porphyromonas gingivalis (strain ATCC 33277 / DSM 20709 / CIP 103683 / JCM 12257 / NCTC 11834 / 2561)).